The primary structure comprises 168 residues: G/U mismatch-specific DNA glycosylase (168 aa).

The protein belongs to the uracil-DNA glycosylase (UDG) superfamily. TDG/mug family. In terms of assembly, binds DNA as a monomer.

It is found in the cytoplasm. It carries out the reaction Specifically hydrolyzes mismatched double-stranded DNA and polynucleotides, releasing free uracil.. Functionally, excises ethenocytosine and uracil, which can arise by alkylation or deamination of cytosine, respectively, from the corresponding mispairs with guanine in ds-DNA. It is capable of hydrolyzing the carbon-nitrogen bond between the sugar-phosphate backbone of the DNA and the mispaired base. The complementary strand guanine functions in substrate recognition. Required for DNA damage lesion repair in stationary-phase cells. In Enterobacter sp. (strain 638), this protein is G/U mismatch-specific DNA glycosylase.